The sequence spans 288 residues: Acetyl-coenzyme A carboxylase carboxyl transferase subunit beta (288 aa).

Residues 34–288 (LFAKCPACKH…HLVSFHGGGQ (255 aa)) enclose the CoA carboxyltransferase N-terminal domain. Zn(2+) contacts are provided by Cys-38, Cys-41, Cys-56, and Cys-59. The C4-type zinc-finger motif lies at 38–59 (CPACKHMIYKKDLGLAKICPTC).

Belongs to the AccD/PCCB family. Acetyl-CoA carboxylase is a heterohexamer composed of biotin carboxyl carrier protein (AccB), biotin carboxylase (AccC) and two subunits each of ACCase subunit alpha (AccA) and ACCase subunit beta (AccD). Zn(2+) is required as a cofactor.

Its subcellular location is the cytoplasm. It carries out the reaction N(6)-carboxybiotinyl-L-lysyl-[protein] + acetyl-CoA = N(6)-biotinyl-L-lysyl-[protein] + malonyl-CoA. The protein operates within lipid metabolism; malonyl-CoA biosynthesis; malonyl-CoA from acetyl-CoA: step 1/1. Component of the acetyl coenzyme A carboxylase (ACC) complex. Biotin carboxylase (BC) catalyzes the carboxylation of biotin on its carrier protein (BCCP) and then the CO(2) group is transferred by the transcarboxylase to acetyl-CoA to form malonyl-CoA. The sequence is that of Acetyl-coenzyme A carboxylase carboxyl transferase subunit beta from Streptococcus pyogenes serotype M49 (strain NZ131).